The sequence spans 241 residues: Superantigen-like protein 13 (241 aa).

The signal sequence occupies residues 1 to 26 (MNNNITKKIILSTTLLLLGTASTQFP).

This sequence belongs to the staphylococcal/streptococcal toxin family. In terms of assembly, interacts with host FPR2; this interaction promotes neutrophil chemotaxis.

Functionally, acts as a pathogen alarming molecule by acting on host neutrophil chemotactic factors FPR2. Plays a role of chemoattractant and induces degranulation and oxidative burst in neutrophils. The polypeptide is Superantigen-like protein 13 (Staphylococcus aureus (strain Newman)).